The sequence spans 510 residues: Peroxidase 2 (510 aa).

The first 19 residues, 1-19 (MRLTYLPLFAGIAIQSASA), serve as a signal peptide directing secretion. The propeptide occupies 20–58 (LPDFFKSSVLKPRRTNSLLINPDAQPDLPTAQQASTAAA). The active-site Proton acceptor is the D228. Residue H362 coordinates heme.

Homodimer. Heme b is required as a cofactor.

In terms of biological role, peroxidase capable of degrading beta-carotene. The polypeptide is Peroxidase 2 (Mycetinis scorodonius (Garlic mushroom)).